The primary structure comprises 87 residues: RNA-binding protein Hfq (87 aa).

The Sm domain occupies 9-68 (DPFLNALRRERIPVSIYLVNGIKLQGQIESFDQFVILLKNTVNQMVYKHAISTVVPARPV). Positions 65–87 (ARPVSHHSGDRPASDRPAEKSEE) are disordered. Residues 71–87 (HSGDRPASDRPAEKSEE) are compositionally biased toward basic and acidic residues.

The protein belongs to the Hfq family.

Functionally, RNA chaperone that binds small regulatory RNA (sRNAs) and mRNAs to facilitate mRNA translational regulation in response to envelope stress, environmental stress and changes in metabolite concentrations. Also binds with high specificity to tRNAs. Essential for virulence in the suckling mouse model of cholera pathogenesis. The protein is RNA-binding protein Hfq of Vibrio cholerae serotype O1 (strain ATCC 39315 / El Tor Inaba N16961).